Here is a 508-residue protein sequence, read N- to C-terminus: Cyclin-A1-1 (508 aa).

Residues 1–28 (MSSNLAASRRSSSSSSVAAAAAAKRPAV) show a composition bias toward low complexity. Disordered regions lie at residues 1 to 40 (MSSN…GKAA) and 82 to 125 (VKKG…ESVL). A compositionally biased stretch (gly residues) spans 29 to 39 (GEGGGGGGGKA). Positions 98–111 (ASAVKSASAKPAPA) are enriched in low complexity.

It belongs to the cyclin family. Cyclin AB subfamily. In terms of tissue distribution, expressed in the dividing region of the root cap and root apex. Expressed in the intercalary meristem of internodes and in adventitious roots under submergence conditions.

Involved in the control of the cell cycle at the G2/M (mitosis) transition. This chain is Cyclin-A1-1 (CYCA1-1), found in Oryza sativa subsp. japonica (Rice).